We begin with the raw amino-acid sequence, 293 residues long: 5'-3' exoribonuclease Rnm (293 aa).

Mn(2+)-binding residues include histidine 17, histidine 19, aspartate 24, histidine 49, glutamate 76, histidine 87, histidine 202, aspartate 259, and histidine 261.

Belongs to the PHP family. TrpH/YciV subfamily. Requires Mn(2+) as cofactor.

It catalyses the reaction a ribonucleoside 3',5'-bisphosphate + H2O = a ribonucleoside 5'-phosphate + phosphate. Exoribonuclease that catalyzes the last steps of 5S, 16S and 23S rRNA 5'-end maturation. Removes 3 nucleotides (nt) from the 5' end of 5S, 16S and 23S rRNA precursors to generate the mature 5' ends. 5S and 23S rRNA maturation occurs more efficiently and accurately on ribosomal particles as compared to free RNA. Efficiently catalyzes the hydrolysis of the 3'-phosphate from 3',5'-bis-phosphonucleotides as well as the successive hydrolysis of 5'-phosphomononucleotides from the 5'-end of short pieces of RNA and DNA, with no specificity toward the identity of the nucleotide base. Is more efficient at hydrolyzing RNA oligonucleotides than DNA oligonucleotides. This enzyme can also hydrolyze annealed DNA duplexes, albeit at a catalytic efficiency lower than that of the corresponding single-stranded oligonucleotides. The sequence is that of 5'-3' exoribonuclease Rnm from Salmonella typhimurium (strain LT2 / SGSC1412 / ATCC 700720).